Reading from the N-terminus, the 714-residue chain is Centromere/kinetochore protein zw10 (714 aa).

The protein belongs to the ZW10 family.

It localises to the cytoplasm. Its subcellular location is the nucleus. It is found in the chromosome. The protein localises to the centromere. The protein resides in the kinetochore. Required for accurate chromosome segregation. The polypeptide is Centromere/kinetochore protein zw10 (mit(1)15) (Drosophila grimshawi (Hawaiian fruit fly)).